The following is a 491-amino-acid chain: Calcium/calmodulin-dependent protein kinase type II delta 1 chain (491 aa).

One can recognise a Protein kinase domain in the interval 13–271 (YQLYEELGKG…AAEALKHPWI (259 aa)). Residues 19–27 (LGKGAFSVV) and K42 contribute to the ATP site. Residue D135 is the Proton acceptor of the active site. T286 is modified (phosphothreonine). S314 carries the post-translational modification Phosphoserine. A disordered region spans residues 315-354 (SKNPYKKPDGVKEPQTTVIHNPTDGNKESSESTNTTIEDE). Positions 328–338 (PQTTVIHNPTD) are enriched in polar residues. T350 carries the post-translational modification Phosphothreonine.

Belongs to the protein kinase superfamily. CAMK Ser/Thr protein kinase family. CaMK subfamily. CAMK2 is composed of four different chains: alpha, beta, gamma, and delta. The different isoforms assemble into homo- or heteromultimeric holoenzymes composed of 8 to 12 subunits. In terms of tissue distribution, first detected at the 18-somite stage where expression is restricted to somite boundaries. At 24 hpf, expression is elevated in epidermal tissue and in the hatching gland. After 24 hpf, expression dimishes, but persists at low levels along the dorsal trunk. At 48 hpf, expression is restricted at a low level to the forebrain. At 72 hpf, weak expression reappears along the entire dorsal trunk in discrete cell bodies.

It carries out the reaction L-seryl-[protein] + ATP = O-phospho-L-seryl-[protein] + ADP + H(+). The catalysed reaction is L-threonyl-[protein] + ATP = O-phospho-L-threonyl-[protein] + ADP + H(+). Autophosphorylation of CAMK2 plays an important role in the regulation of the kinase activity. Functionally, caM-kinase II (CAMK2) is a prominent kinase in the central nervous system. The protein is Calcium/calmodulin-dependent protein kinase type II delta 1 chain of Danio rerio (Zebrafish).